A 243-amino-acid chain; its full sequence is Pyridoxine 5'-phosphate synthase (243 aa).

A 3-amino-2-oxopropyl phosphate-binding site is contributed by Asn-9. 11 to 12 (DH) lines the 1-deoxy-D-xylulose 5-phosphate pocket. A 3-amino-2-oxopropyl phosphate-binding site is contributed by Arg-20. His-45 acts as the Proton acceptor in catalysis. 1-deoxy-D-xylulose 5-phosphate-binding residues include Arg-47 and His-52. Catalysis depends on Glu-72, which acts as the Proton acceptor. Residue Thr-102 participates in 1-deoxy-D-xylulose 5-phosphate binding. The active-site Proton donor is His-193. Residues Gly-194 and 215–216 (GH) each bind 3-amino-2-oxopropyl phosphate.

The protein belongs to the PNP synthase family. In terms of assembly, homooctamer; tetramer of dimers.

The protein resides in the cytoplasm. It carries out the reaction 3-amino-2-oxopropyl phosphate + 1-deoxy-D-xylulose 5-phosphate = pyridoxine 5'-phosphate + phosphate + 2 H2O + H(+). Its pathway is cofactor biosynthesis; pyridoxine 5'-phosphate biosynthesis; pyridoxine 5'-phosphate from D-erythrose 4-phosphate: step 5/5. In terms of biological role, catalyzes the complicated ring closure reaction between the two acyclic compounds 1-deoxy-D-xylulose-5-phosphate (DXP) and 3-amino-2-oxopropyl phosphate (1-amino-acetone-3-phosphate or AAP) to form pyridoxine 5'-phosphate (PNP) and inorganic phosphate. In Vibrio vulnificus (strain CMCP6), this protein is Pyridoxine 5'-phosphate synthase.